A 511-amino-acid chain; its full sequence is Phenylalanine--tRNA ligase alpha subunit (511 aa).

L-phenylalanine contacts are provided by residues Thr-352, 390–392 (QVE), Tyr-429, and Phe-455.

The protein belongs to the class-II aminoacyl-tRNA synthetase family. Phe-tRNA synthetase alpha subunit type 2 subfamily. Tetramer of two alpha and two beta subunits. Mg(2+) is required as a cofactor.

The protein resides in the cytoplasm. It carries out the reaction tRNA(Phe) + L-phenylalanine + ATP = L-phenylalanyl-tRNA(Phe) + AMP + diphosphate + H(+). The protein is Phenylalanine--tRNA ligase alpha subunit of Methanothermobacter thermautotrophicus (strain ATCC 29096 / DSM 1053 / JCM 10044 / NBRC 100330 / Delta H) (Methanobacterium thermoautotrophicum).